A 188-amino-acid chain; its full sequence is MLYIEVLLLAIGLSMDSLAVSVTGGAVLKNNCTAGNIIKIASVLGIFQAGMTVIGYTMGLGFEKYICAFDHWIAFTLLLYLGGKMIYDSTKEEEEDGKFDPLCNRTLCGLGIATSIDALAVGISLAILKSPLLLQASTIGVVTFAISAFGVYFGNRFGKRIDLKLDLIGGLILIGIGTKILIEHLFFS.

A run of 6 helical transmembrane segments spans residues leucine 2–valine 22, isoleucine 40–leucine 60, isoleucine 66–isoleucine 86, leucine 107–isoleucine 127, leucine 133–phenylalanine 153, and leucine 167–phenylalanine 187.

The protein belongs to the MntP (TC 9.B.29) family.

The protein resides in the cell inner membrane. Its function is as follows. Probably functions as a manganese efflux pump. The sequence is that of Putative manganese efflux pump MntP from Parabacteroides distasonis (strain ATCC 8503 / DSM 20701 / CIP 104284 / JCM 5825 / NCTC 11152).